The chain runs to 98 residues: Class II hydrophobin 3 (98 aa).

An N-terminal signal peptide occupies residues 1–18 (MQFTTTTLIAILSALAVA). N-linked (GlcNAc...) asparagine glycosylation is found at Asn26 and Asn54. 4 disulfides stabilise this stretch: Cys35–Cys83, Cys44–Cys74, Cys45–Cys57, and Cys84–Cys95.

This sequence belongs to the cerato-ulmin hydrophobin family.

The protein resides in the secreted. The protein localises to the cell wall. In terms of biological role, aerial growth, conidiation, and dispersal of filamentous fungi in the environment rely upon a capability of their secreting small amphipathic proteins called hydrophobins (HPBs) with low sequence identity. Class I can self-assemble into an outermost layer of rodlet bundles on aerial cell surfaces, conferring cellular hydrophobicity that supports fungal growth, development and dispersal; whereas Class II form highly ordered films at water-air interfaces through intermolecular interactions but contribute nothing to the rodlet structure. In Botryotinia fuckeliana, hydrophobins are not involved in conferring surface hydrophobicity to conidia and aerial hyphae and their function in sclerotia and fruiting bodies remains to be investigated. The protein is Class II hydrophobin 3 of Botryotinia fuckeliana (strain B05.10) (Noble rot fungus).